Consider the following 94-residue polypeptide: Putative pterin-4-alpha-carbinolamine dehydratase (94 aa).

It belongs to the pterin-4-alpha-carbinolamine dehydratase family.

The catalysed reaction is (4aS,6R)-4a-hydroxy-L-erythro-5,6,7,8-tetrahydrobiopterin = (6R)-L-erythro-6,7-dihydrobiopterin + H2O. This Mycolicibacterium smegmatis (strain ATCC 700084 / mc(2)155) (Mycobacterium smegmatis) protein is Putative pterin-4-alpha-carbinolamine dehydratase.